Consider the following 148-residue polypeptide: Large ribosomal subunit protein uL13 (148 aa).

The protein belongs to the universal ribosomal protein uL13 family. As to quaternary structure, part of the 50S ribosomal subunit.

Functionally, this protein is one of the early assembly proteins of the 50S ribosomal subunit, although it is not seen to bind rRNA by itself. It is important during the early stages of 50S assembly. In Ureaplasma parvum serovar 3 (strain ATCC 27815 / 27 / NCTC 11736), this protein is Large ribosomal subunit protein uL13.